Here is an 89-residue protein sequence, read N- to C-terminus: uncharacterized protein (89 aa).

It to Rhizobium NGR234A y4oN.

This is an uncharacterized protein from Sinorhizobium fredii (strain NBRC 101917 / NGR234).